Consider the following 57-residue polypeptide: Small ribosomal subunit protein bS21 (57 aa).

This sequence belongs to the bacterial ribosomal protein bS21 family.

This chain is Small ribosomal subunit protein bS21, found in Geobacillus kaustophilus (strain HTA426).